Here is a 760-residue protein sequence, read N- to C-terminus: DNA-directed RNA polymerase subunit beta' (760 aa).

The Zn(2+) site is built by cysteine 76, cysteine 78, cysteine 90, and cysteine 93. Mg(2+) contacts are provided by aspartate 594, aspartate 596, and aspartate 598.

It belongs to the RNA polymerase beta' chain family. RpoC1 subfamily. In terms of assembly, in plastids the minimal PEP RNA polymerase catalytic core is composed of four subunits: alpha, beta, beta', and beta''. When a (nuclear-encoded) sigma factor is associated with the core the holoenzyme is formed, which can initiate transcription. The cofactor is Mg(2+). It depends on Zn(2+) as a cofactor.

The protein localises to the plastid. Its subcellular location is the chloroplast. It carries out the reaction RNA(n) + a ribonucleoside 5'-triphosphate = RNA(n+1) + diphosphate. DNA-dependent RNA polymerase catalyzes the transcription of DNA into RNA using the four ribonucleoside triphosphates as substrates. This chain is DNA-directed RNA polymerase subunit beta', found in Bigelowiella natans (Pedinomonas minutissima).